We begin with the raw amino-acid sequence, 200 residues long: Mediator of RNA polymerase II transcription subunit 22 (200 aa).

Residues 93–122 (SVNEAIDQRNQQLRALQEECDRKLITLRDE) are a coiled coil. The disordered stretch occupies residues 169 to 200 (PLLASPETGAGPLQSAAPVHSHGGGPGPTEHT). Gly residues predominate over residues 190 to 200 (HGGGPGPTEHT).

This sequence belongs to the Mediator complex subunit 22 family. In terms of assembly, component of the Mediator complex, which is composed of MED1, MED4, MED6, MED7, MED8, MED9, MED10, MED11, MED12, MED13, MED13L, MED14, MED15, MED16, MED17, MED18, MED19, MED20, MED21, MED22, MED23, MED24, MED25, MED26, MED27, MED29, MED30, MED31, CCNC, CDK8 and CDC2L6/CDK11. The MED12, MED13, CCNC and CDK8 subunits form a distinct module termed the CDK8 module. Mediator containing the CDK8 module is less active than Mediator lacking this module in supporting transcriptional activation. Individual preparations of the Mediator complex lacking one or more distinct subunits have been variously termed ARC, CRSP, DRIP, PC2, SMCC and TRAP.

It localises to the nucleus. In terms of biological role, component of the Mediator complex, a coactivator involved in the regulated transcription of nearly all RNA polymerase II-dependent genes. Mediator functions as a bridge to convey information from gene-specific regulatory proteins to the basal RNA polymerase II transcription machinery. Mediator is recruited to promoters by direct interactions with regulatory proteins and serves as a scaffold for the assembly of a functional preinitiation complex with RNA polymerase II and the general transcription factors. This chain is Mediator of RNA polymerase II transcription subunit 22 (Med22), found in Mus musculus (Mouse).